We begin with the raw amino-acid sequence, 942 residues long: Ubiquitin carboxyl-terminal hydrolase 33 (942 aa).

The UBP-type zinc finger occupies 37–140; that stretch reads NHCPHLDSVG…PSLPHVRQPH (104 aa). The Zn(2+) site is built by C39, H41, C61, C64, C74, C79, C84, H91, H95, H101, C114, and C117. The USP domain maps to 185-715; that stretch reads TGLKNIGNTC…EAYVLFYRKS (531 aa). C194 acts as the Nucleophile in catalysis. The disordered stretch occupies residues 294-357; it reads VEEDPQTITT…MLIQDDENNS (64 aa). Positions 315 to 327 are enriched in polar residues; it reads DVDFQSCESCSNS. Residue S377 is modified to Phosphoserine. Positions 419-431 are enriched in polar residues; that stretch reads DLSTPQILPSNEG. The interval 419–469 is disordered; that stretch reads DLSTPQILPSNEGVNPRLSASPPKSGNLWPGLAPPHKKAQSASPKRKKQHK. Residue S439 is modified to Phosphoserine. Residues 453 to 469 are compositionally biased toward basic residues; sequence PHKKAQSASPKRKKQHK. The active-site Proton acceptor is H673. 2 DUSP domains span residues 717–810 and 818–921; these read EEAQ…LYIC and EKIE…RPPV.

This sequence belongs to the peptidase C19 family. USP20/USP33 subfamily. Interacts with VHL, leading to its ubiquitination and subsequent degradation. Interacts with ARRB1 and ARRB2. Interacts with ADRB2. Interacts with DIO2. Interacts with ROBO1. Interacts with SELENBP1; in a selenium-dependent manner. Interacts with CCP110. In terms of processing, ubiquitinated via a VHL-dependent pathway for proteasomal degradation. Widely expressed.

It localises to the cytoplasm. It is found in the perinuclear region. The protein localises to the cytoskeleton. The protein resides in the microtubule organizing center. Its subcellular location is the centrosome. It localises to the golgi apparatus. The enzyme catalyses Thiol-dependent hydrolysis of ester, thioester, amide, peptide and isopeptide bonds formed by the C-terminal Gly of ubiquitin (a 76-residue protein attached to proteins as an intracellular targeting signal).. Functionally, deubiquitinating enzyme involved in various processes such as centrosome duplication, cellular migration and beta-2 adrenergic receptor/ADRB2 recycling. Involved in regulation of centrosome duplication by mediating deubiquitination of CCP110 in S and G2/M phase, leading to stabilize CCP110 during the period which centrioles duplicate and elongate. Involved in cell migration via its interaction with intracellular domain of ROBO1, leading to regulate the Slit signaling. Plays a role in commissural axon guidance cross the ventral midline of the neural tube in a Slit-dependent manner, possibly by mediating the deubiquitination of ROBO1. Acts as a regulator of G-protein coupled receptor (GPCR) signaling by mediating the deubiquitination of beta-arrestins (ARRB1 and ARRB2) and beta-2 adrenergic receptor (ADRB2). Plays a central role in ADRB2 recycling and resensitization after prolonged agonist stimulation by constitutively binding ADRB2, mediating deubiquitination of ADRB2 and inhibiting lysosomal trafficking of ADRB2. Upon dissociation, it is probably transferred to the translocated beta-arrestins, leading to beta-arrestins deubiquitination and disengagement from ADRB2. This suggests the existence of a dynamic exchange between the ADRB2 and beta-arrestins. Deubiquitinates DIO2, thereby regulating thyroid hormone regulation. Mediates deubiquitination of both 'Lys-48'- and 'Lys-63'-linked polyubiquitin chains. This is Ubiquitin carboxyl-terminal hydrolase 33 (USP33) from Homo sapiens (Human).